The primary structure comprises 215 residues: uncharacterized protein (215 aa).

2 helical membrane-spanning segments follow: residues 40 to 60 (VLFP…FCSL) and 72 to 92 (LIWF…VGYL).

The protein localises to the mitochondrion membrane. This is an uncharacterized protein from Arabidopsis thaliana (Mouse-ear cress).